We begin with the raw amino-acid sequence, 443 residues long: MSSSPNIGFISLGCPKNLVDSERILTELRSDGYNIISSYEGADLVIVNTCGFIDSAVQESLESIGEALENNGKVIVTGCLGAKENQIREIHPQVLEITGPHSYEAVMKHVHKYVPKPEYSPYTSLVPKQGIKLTPKHYAYLKISEGCDHRCTFCIIPSMRGDLDSRSIVHILDEAKRLVDAGVKEILVVSQDTSAYALDKKKENASKTVFWNGMPIKNDLITLCEKLGSLGAWVRLHYVYPYPHVDNLIPLMAEGKILPYLDIPLQHASPKILKMMKRPGSIERTLERIKKWREICPDLTLRSTFIVGFPGETEEDFQLLLDFLQEAQLDRVGCFKFSPVEGAVATDMEDQIPEEIKEERFHRFMQLQQKISAERLRQKIGRTLSVIIDEIDEEGIIGRTMADAPEIDGVVYVDNFSKVEVKLGQIINVTITNADEYDLWGEI.

Residues 5-115 enclose the MTTase N-terminal domain; sequence PNIGFISLGC…VMKHVHKYVP (111 aa). Residues Cys-14, Cys-50, Cys-79, Cys-147, Cys-151, and Cys-154 each contribute to the [4Fe-4S] cluster site. A Radical SAM core domain is found at 133-374; sequence LTPKHYAYLK…MQLQQKISAE (242 aa). A TRAM domain is found at 377-443; the sequence is RQKIGRTLSV…ADEYDLWGEI (67 aa).

It belongs to the methylthiotransferase family. RimO subfamily. [4Fe-4S] cluster is required as a cofactor.

It is found in the cytoplasm. The enzyme catalyses L-aspartate(89)-[ribosomal protein uS12]-hydrogen + (sulfur carrier)-SH + AH2 + 2 S-adenosyl-L-methionine = 3-methylsulfanyl-L-aspartate(89)-[ribosomal protein uS12]-hydrogen + (sulfur carrier)-H + 5'-deoxyadenosine + L-methionine + A + S-adenosyl-L-homocysteine + 2 H(+). Catalyzes the methylthiolation of an aspartic acid residue of ribosomal protein uS12. The chain is Ribosomal protein uS12 methylthiotransferase RimO from Histophilus somni (strain 2336) (Haemophilus somnus).